Here is a 218-residue protein sequence, read N- to C-terminus: Glutathione S-transferase Mu 7 (218 aa).

A GST N-terminal domain is found at 2–88 (PMTLGYWDIR…YLGRKHNLCG (87 aa)). Glutathione is bound by residues 7-8 (YW), 46-50 (WLNEK), 59-60 (NL), and 72-73 (QS). The GST C-terminal domain occupies 90-208 (TEEERIRVDI…KSSRFLPRPL (119 aa)). Position 116 (Tyr-116) interacts with substrate.

This sequence belongs to the GST superfamily. Mu family. Homodimer.

The protein resides in the cytoplasm. The enzyme catalyses RX + glutathione = an S-substituted glutathione + a halide anion + H(+). Its function is as follows. Conjugation of reduced glutathione to a wide number of exogenous and endogenous hydrophobic electrophiles. The chain is Glutathione S-transferase Mu 7 from Rattus norvegicus (Rat).